We begin with the raw amino-acid sequence, 144 residues long: Universal stress protein F (144 aa).

It belongs to the universal stress protein A family. In terms of assembly, homodimer.

The sequence is that of Universal stress protein F (uspF) from Escherichia coli O157:H7.